We begin with the raw amino-acid sequence, 600 residues long: 1,8-cineole synthase 1, chloroplastic (600 aa).

The transit peptide at 1–31 (MATLRISSALIYQNTLTHHFRLRRPHRFVCK) directs the protein to the chloroplast. Residue aspartate 342 coordinates dimethylallyl diphosphate. Aspartate 342 and aspartate 346 together coordinate Mg(2+). The short motif at 342–346 (DDIYD) is the DDXXD motif element. 3 residues coordinate dimethylallyl diphosphate: glutamate 420, arginine 484, and asparagine 487. Residues asparagine 487, threonine 491, and glutamate 495 each contribute to the Mg(2+) site.

Belongs to the terpene synthase family. Tpsb subfamily. Mg(2+) serves as cofactor. Mn(2+) is required as a cofactor. In terms of tissue distribution, predominantly expressed in roots and at much lower levels in siliques. Not found in leaves, flowers or stems. Also detected in flowers in cv. Landsberg erecta. Not expressed in root apical meristem and elongation zone. Found in the vascular system of young roots and additionally in the cortex and epidermal cell layer of older roots.

The protein localises to the plastid. Its subcellular location is the chloroplast. The catalysed reaction is (2E)-geranyl diphosphate + H2O = 1,8-cineole + diphosphate. The protein operates within secondary metabolite biosynthesis; terpenoid biosynthesis. Involved in monoterpene (C10) biosynthesis. The major product is 1,8-cineole (52%) followed by minor amounts of sabinene (14.5%), myrcene (13.3%), (-)-(1S)-beta-pinene (7.8%), (-)-(4S)-limonene (4.0%), (E)-beta-ocimene (2.7%), alpha-terpineol (2.4%), (-)-(1S)-alpha-pinene (1.9%), terpinolene (0.8%), and (+)-alpha-thujene (0.6%). In Arabidopsis thaliana (Mouse-ear cress), this protein is 1,8-cineole synthase 1, chloroplastic (TPS27).